The primary structure comprises 775 residues: Dipeptidyl peptidase 4 (775 aa).

Positions 1-15 (MKLLSLLMLAGIAQA) are cleaved as a signal peptide. Asparagine 81, asparagine 111, asparagine 170, and asparagine 219 each carry an N-linked (GlcNAc...) asparagine glycan. Catalysis depends on charge relay system residues serine 613, aspartate 690, and histidine 725.

The protein belongs to the peptidase S9B family.

It is found in the secreted. It catalyses the reaction Release of an N-terminal dipeptide, Xaa-Yaa-|-Zaa-, from a polypeptide, preferentially when Yaa is Pro, provided Zaa is neither Pro nor hydroxyproline.. Extracellular dipeptidyl-peptidase which removes N-terminal dipeptides sequentially from polypeptides having unsubstituted N-termini provided that the penultimate residue is proline. Contributes to pathogenicity. This Trichophyton tonsurans (Scalp ringworm fungus) protein is Dipeptidyl peptidase 4 (DPP4).